Consider the following 265-residue polypeptide: Transcription factor LBX1b (265 aa).

Positions 121–180 form a DNA-binding region, homeobox; the sequence is RRKSRTAFTNHQLYELEKRFLHQKYLSPADRDQIAHQLGLTNAQVITWFQNRRAKLKRDL.

The protein localises to the nucleus. In terms of biological role, transcription factor required for the development of hypaxial muscles. The sequence is that of Transcription factor LBX1b from Danio rerio (Zebrafish).